Here is a 157-residue protein sequence, read N- to C-terminus: MAEVESFTLDHTKVKAPYVRLIEEQKGPKGGTIANYDLRLAQPNQTSIETGGLHTLEHLFASLMRDRLDGIIDISPFGCRTGFHMISWYTYDTETVAKALKETLTEIRDSIEFSDIPGVSEKTCGNFKDHSLWSAKNWAKVILDEGISSDPFERKVV.

The Fe cation site is built by histidine 54, histidine 58, and cysteine 124.

It belongs to the LuxS family. Homodimer. Fe cation serves as cofactor.

The enzyme catalyses S-(5-deoxy-D-ribos-5-yl)-L-homocysteine = (S)-4,5-dihydroxypentane-2,3-dione + L-homocysteine. Its function is as follows. Involved in the synthesis of autoinducer 2 (AI-2) which is secreted by bacteria and is used to communicate both the cell density and the metabolic potential of the environment. The regulation of gene expression in response to changes in cell density is called quorum sensing. Catalyzes the transformation of S-ribosylhomocysteine (RHC) to homocysteine (HC) and 4,5-dihydroxy-2,3-pentadione (DPD). This Oenococcus oeni (strain ATCC BAA-331 / PSU-1) protein is S-ribosylhomocysteine lyase.